A 299-amino-acid chain; its full sequence is Pyridoxal 5'-phosphate synthase subunit PdxS (299 aa).

Asp24 serves as a coordination point for D-ribose 5-phosphate. Lys81 acts as the Schiff-base intermediate with D-ribose 5-phosphate in catalysis. Gly153 is a D-ribose 5-phosphate binding site. D-glyceraldehyde 3-phosphate is bound at residue Arg165. D-ribose 5-phosphate is bound by residues Gly219 and 240-241 (GS).

Belongs to the PdxS/SNZ family. In the presence of PdxT, forms a dodecamer of heterodimers.

The enzyme catalyses aldehydo-D-ribose 5-phosphate + D-glyceraldehyde 3-phosphate + L-glutamine = pyridoxal 5'-phosphate + L-glutamate + phosphate + 3 H2O + H(+). It participates in cofactor biosynthesis; pyridoxal 5'-phosphate biosynthesis. Catalyzes the formation of pyridoxal 5'-phosphate from ribose 5-phosphate (RBP), glyceraldehyde 3-phosphate (G3P) and ammonia. The ammonia is provided by the PdxT subunit. Can also use ribulose 5-phosphate and dihydroxyacetone phosphate as substrates, resulting from enzyme-catalyzed isomerization of RBP and G3P, respectively. This Methanococcus maripaludis (strain C6 / ATCC BAA-1332) protein is Pyridoxal 5'-phosphate synthase subunit PdxS.